We begin with the raw amino-acid sequence, 206 residues long: MAKYLGPKLKLCRRENTDLFFKSGIRAIDSKCKFDQFPGQHGSKRQRLSDYGVQLREKQKVRRLYGILEAQFRNYYKHASRLKGNTGENLLFLLENRLDNVTYRIGFGSTRAEARQLVSHKSILVNNCTVNIPSYQVSPGDVISIHKNSKLQSRIKAALELSEQRETPIWIEVDFNKMQGIYKRVPERSDLSAEINEYLIIELYSK.

The region spanning 96 to 156 (NRLDNVTYRI…KNSKLQSRIK (61 aa)) is the S4 RNA-binding domain.

It belongs to the universal ribosomal protein uS4 family. In terms of assembly, part of the 30S ribosomal subunit. Contacts protein S5. The interaction surface between S4 and S5 is involved in control of translational fidelity.

One of the primary rRNA binding proteins, it binds directly to 16S rRNA where it nucleates assembly of the body of the 30S subunit. Functionally, with S5 and S12 plays an important role in translational accuracy. The polypeptide is Small ribosomal subunit protein uS4 (Buchnera aphidicola subsp. Baizongia pistaciae (strain Bp)).